Reading from the N-terminus, the 452-residue chain is Pup--protein ligase (452 aa).

A Mg(2+)-binding site is contributed by Glu9. Position 53 (Arg53) interacts with ATP. Tyr55 contributes to the Mg(2+) binding site. The Proton acceptor role is filled by Asp57. Residue Glu63 participates in Mg(2+) binding. ATP contacts are provided by Thr66 and Trp419.

Belongs to the Pup ligase/Pup deamidase family. Pup-conjugating enzyme subfamily.

It carries out the reaction ATP + [prokaryotic ubiquitin-like protein]-L-glutamate + [protein]-L-lysine = ADP + phosphate + N(6)-([prokaryotic ubiquitin-like protein]-gamma-L-glutamyl)-[protein]-L-lysine.. It functions in the pathway protein degradation; proteasomal Pup-dependent pathway. It participates in protein modification; protein pupylation. Its function is as follows. Catalyzes the covalent attachment of the prokaryotic ubiquitin-like protein modifier Pup to the proteasomal substrate proteins, thereby targeting them for proteasomal degradation. This tagging system is termed pupylation. The ligation reaction involves the side-chain carboxylate of the C-terminal glutamate of Pup and the side-chain amino group of a substrate lysine. The chain is Pup--protein ligase from Mycobacterium leprae (strain Br4923).